The chain runs to 146 residues: Flavodoxin (146 aa).

Residues 4-143 (ALIVYGSTTG…EVLDWAREVL (140 aa)) form the Flavodoxin-like domain.

This sequence belongs to the flavodoxin family. It depends on FMN as a cofactor.

Functionally, electron-transfer proteins that function in various electron transport systems in microorganisms. Functionally interchangeable with ferredoxin. This is Flavodoxin from Megalodesulfovibrio gigas (strain ATCC 19364 / DSM 1382 / NCIMB 9332 / VKM B-1759) (Desulfovibrio gigas).